The primary structure comprises 358 residues: Histidinol-phosphate aminotransferase (358 aa).

Lysine 218 bears the N6-(pyridoxal phosphate)lysine mark.

This sequence belongs to the class-II pyridoxal-phosphate-dependent aminotransferase family. Histidinol-phosphate aminotransferase subfamily. In terms of assembly, homodimer. Requires pyridoxal 5'-phosphate as cofactor.

It carries out the reaction L-histidinol phosphate + 2-oxoglutarate = 3-(imidazol-4-yl)-2-oxopropyl phosphate + L-glutamate. It functions in the pathway amino-acid biosynthesis; L-histidine biosynthesis; L-histidine from 5-phospho-alpha-D-ribose 1-diphosphate: step 7/9. The protein is Histidinol-phosphate aminotransferase of Dehalococcoides mccartyi (strain ATCC BAA-2266 / KCTC 15142 / 195) (Dehalococcoides ethenogenes (strain 195)).